An 89-amino-acid chain; its full sequence is Small ribosomal subunit protein uS15 (89 aa).

Positions 1 to 21 are enriched in basic and acidic residues; sequence MVLDPTQKKSVIDAHAKHEGD. Residues 1–24 are disordered; that stretch reads MVLDPTQKKSVIDAHAKHEGDTGS.

The protein belongs to the universal ribosomal protein uS15 family. In terms of assembly, part of the 30S ribosomal subunit. Forms a bridge to the 50S subunit in the 70S ribosome, contacting the 23S rRNA.

Its function is as follows. One of the primary rRNA binding proteins, it binds directly to 16S rRNA where it helps nucleate assembly of the platform of the 30S subunit by binding and bridging several RNA helices of the 16S rRNA. In terms of biological role, forms an intersubunit bridge (bridge B4) with the 23S rRNA of the 50S subunit in the ribosome. This chain is Small ribosomal subunit protein uS15, found in Desulfovibrio desulfuricans (strain ATCC 27774 / DSM 6949 / MB).